We begin with the raw amino-acid sequence, 148 residues long: Small ribosomal subunit protein eS6 (148 aa).

This sequence belongs to the eukaryotic ribosomal protein eS6 family.

In Pyrobaculum neutrophilum (strain DSM 2338 / JCM 9278 / NBRC 100436 / V24Sta) (Thermoproteus neutrophilus), this protein is Small ribosomal subunit protein eS6.